Consider the following 251-residue polypeptide: Probable transcriptional regulatory protein MAB_2888c (251 aa).

The interval 1–20 (MSGHSKWATTKHQKAVKDAR) is disordered.

The protein belongs to the TACO1 family.

The protein localises to the cytoplasm. The chain is Probable transcriptional regulatory protein MAB_2888c from Mycobacteroides abscessus (strain ATCC 19977 / DSM 44196 / CCUG 20993 / CIP 104536 / JCM 13569 / NCTC 13031 / TMC 1543 / L948) (Mycobacterium abscessus).